A 367-amino-acid polypeptide reads, in one-letter code: Fructose-1,6-bisphosphatase class 1 3 (367 aa).

The protein belongs to the FBPase class 1 family. Homotetramer.

The protein localises to the cytoplasm. The catalysed reaction is beta-D-fructose 1,6-bisphosphate + H2O = beta-D-fructose 6-phosphate + phosphate. Its pathway is carbohydrate biosynthesis; gluconeogenesis. The sequence is that of Fructose-1,6-bisphosphatase class 1 3 from Paraburkholderia phymatum (strain DSM 17167 / CIP 108236 / LMG 21445 / STM815) (Burkholderia phymatum).